The sequence spans 518 residues: Subtilisin-like serine protease Cla h 9.0101 (518 aa).

The N-terminal stretch at 1 to 16 is a signal peptide; it reads MRGALAGLSLATLATA. The propeptide at 17-138 is removed in mature form; it reads SPVLVNSIHN…ERDQEVHVLG (122 aa). An Inhibitor I9 domain is found at 44 to 136; it reads YMIKFKDHVT…LVERDQEVHV (93 aa). One can recognise a Peptidase S8 domain in the interval 148 to 454; the sequence is PWGLARISHR…GGESNYSAIV (307 aa). Residues D184 and H216 each act as charge relay system in the active site. Positions 244–298 are igE-binding; the sequence is RSNGSGSMSDVVKGVEYAAESHLEQVSITKKGKRKGFKGSTANMSLGGGKSPILD. N-linked (GlcNAc...) asparagine glycosylation is found at N246 and N286. Residue S382 is the Charge relay system of the active site. N449 is a glycosylation site (N-linked (GlcNAc...) asparagine). Positions 460-518 are cleaved as a propeptide — removed in mature form; sequence KATHRPTMLEEIESEAKVASKKVYSEGDELAHKVAELTEKVEDLIAGELKDMFRELKRE.

The protein belongs to the peptidase S8 family.

Functionally, serine protease. The sequence is that of Subtilisin-like serine protease Cla h 9.0101 from Davidiella tassiana (Mycosphaerella tassiana).